The primary structure comprises 172 residues: Adenine phosphoribosyltransferase (172 aa).

This sequence belongs to the purine/pyrimidine phosphoribosyltransferase family. In terms of assembly, homodimer.

The protein localises to the cytoplasm. The enzyme catalyses AMP + diphosphate = 5-phospho-alpha-D-ribose 1-diphosphate + adenine. The protein operates within purine metabolism; AMP biosynthesis via salvage pathway; AMP from adenine: step 1/1. Catalyzes a salvage reaction resulting in the formation of AMP, that is energically less costly than de novo synthesis. The protein is Adenine phosphoribosyltransferase of Clostridium botulinum (strain Loch Maree / Type A3).